Consider the following 452-residue polypeptide: NADH-quinone oxidoreductase subunit N 2 (452 aa).

Transmembrane regions (helical) follow at residues 6–26 (VLIP…YGFI), 33–53 (TYIL…FNFG), 70–90 (TLRI…YSDL), 97–117 (SVEY…MIVA), 120–140 (LLIL…LAGF), 154–174 (YFIL…FFYA), 194–214 (ILLG…LAPF), 232–252 (FLST…FLSI), 258–278 (IQDL…VLAL), 286–306 (MLAY…LLPE), 311–331 (ISLI…FAFI), 355–375 (FCII…GFIV), 387–407 (GYGS…FYYL), and 432–452 (ALSG…LLIF).

It belongs to the complex I subunit 2 family. NDH-1 is composed of 14 different subunits. Subunits NuoA, H, J, K, L, M, N constitute the membrane sector of the complex.

It is found in the cell inner membrane. It catalyses the reaction a quinone + NADH + 5 H(+)(in) = a quinol + NAD(+) + 4 H(+)(out). In terms of biological role, NDH-1 shuttles electrons from NADH, via FMN and iron-sulfur (Fe-S) centers, to quinones in the respiratory chain. The immediate electron acceptor for the enzyme in this species is believed to be ubiquinone. Couples the redox reaction to proton translocation (for every two electrons transferred, four hydrogen ions are translocated across the cytoplasmic membrane), and thus conserves the redox energy in a proton gradient. The chain is NADH-quinone oxidoreductase subunit N 2 from Thermodesulfovibrio yellowstonii (strain ATCC 51303 / DSM 11347 / YP87).